The primary structure comprises 1239 residues: DNA polymerase subunit gamma-1 (1239 aa).

Positions 1–68 (MSRLLWRKVA…PQVLSSEGGQ (68 aa)) are disordered. 2 stretches are compositionally biased toward low complexity: residues 9–36 (VAGA…SDPS) and 44–60 (QQQQ…QQPQ). Residues 43–55 (QQQQQQQQQQQQQ) are does not contribute to polymerase and exonuclease enzymatic activities. The short motif at 196–200 (VFDVE) is the Exo I element. D198 functions as the Exonuclease activity in the catalytic mechanism. The Exo II motif lies at 267 to 275 (VGHNVSFDR). Residue S306 participates in DNA binding. The disordered stretch occupies residues 318–340 (GKHKVQPPTKQGQKSQRKARRGP). An Exo III motif is present at residues 395 to 403 (YCAQDVWAT). A disordered region spans residues 506 to 531 (EPATASKLPIEGAGAPGDPMDQEDLG). The interval 510 to 571 (ASKLPIEGAG…RPQHLPGHPG (62 aa)) is accessory-interacting determinant. R579 provides a ligand contact to RNA. Residue S593 coordinates DNA. H754, G763, and K768 together coordinate RNA. 2 residues coordinate DNA: K806 and T849. Positions 858 to 864 (TWLTASN) are trigger loop. RNA-binding residues include S863 and R869. A Pol A motif is present at residues 887–896 (VGADVDSQEL). A 2'-deoxyribonucleoside 5'-triphosphate-binding residues include D890, V891, S893, E895, R943, K947, and Y951. 2 residues coordinate Mg(2+): D890 and V891. Positions 943 to 958 (REHAKIFNYGRIYGAG) match the Pol B motif. Positions 1094 and 1095 each coordinate DNA. The short motif at 1134–1141 (HDEVRYLV) is the Pol C element. An a 2'-deoxyribonucleoside 5'-triphosphate-binding site is contributed by D1135. D1135 is a Mg(2+) binding site.

It belongs to the DNA polymerase type-A family. Heterotrimer composed of a catalytic subunit and a homodimer of accessory subunits (POLG:POLG2). Interacts with TTC3. Interacts with LIG3. The cofactor is Mg(2+).

The protein localises to the mitochondrion. It is found in the mitochondrion matrix. Its subcellular location is the mitochondrion nucleoid. The enzyme catalyses DNA(n) + a 2'-deoxyribonucleoside 5'-triphosphate = DNA(n+1) + diphosphate. The catalysed reaction is a 3'-end 2'-deoxyribonucleotidyl-deoxyribonucleotide-DNA + H2O = a 3'-end 2'-deoxyribonucleotide-DNA + a 2'-deoxyribonucleoside 5'-phosphate + H(+). It catalyses the reaction a 5'-end 2'-deoxyribose-2'-deoxyribonucleotide-DNA = (2E,4S)-4-hydroxypenten-2-al-5-phosphate + a 5'-end 5'-phospho-2'-deoxyribonucleoside-DNA + H(+). Its activity is regulated as follows. Inhibited by dideoxynucleotides such as antiviral agent zalcitabine. Catalytic subunit of DNA polymerase gamma solely responsible for replication of mitochondrial DNA (mtDNA). Replicates both heavy and light strands of the circular mtDNA genome using a single-stranded DNA template, RNA primers and the four deoxyribonucleoside triphosphates as substrates. Has 5' -&gt; 3' polymerase activity. Functionally interacts with TWNK and SSBP1 at the replication fork to form a highly processive replisome, where TWNK unwinds the double-stranded DNA template prior to replication and SSBP1 covers the parental heavy strand to enable continuous replication of the entire mitochondrial genome. A single nucleotide incorporation cycle includes binding of the incoming nucleotide at the insertion site, a phosphodiester bond formation reaction that extends the 3'-end of the primer DNA, and translocation of the primer terminus to the post-insertion site. After completing replication of a mtDNA strand, mediates 3' -&gt; 5' exonucleolytic degradation at the nick to enable proper ligation. Highly accurate due to high nucleotide selectivity and 3' -&gt; 5' exonucleolytic proofreading. Proficiently corrects base substitutions, single-base additions and deletions in non-repetitive sequences and short repeats, but displays lower proofreading activity when replicating longer homopolymeric stretches. Exerts exonuclease activity toward single-stranded DNA and double-stranded DNA containing 3'-terminal mispairs. When a misincorporation occurs, transitions from replication to a pro-nucleolytic editing mode and removes the missincorporated nucleoside in the exonuclease active site. Proceeds via an SN2 nucleolytic mechanism in which Asp-198 catalyzes phosphodiester bond hydrolysis and Glu-200 stabilizes the leaving group. As a result the primer strand becomes one nucleotide shorter and is positioned in the post-insertion site, ready to resume DNA synthesis. Exerts 5'-deoxyribose phosphate (dRP) lyase activity and mediates repair-associated mtDNA synthesis (gap filling) in base-excision repair pathway. Catalyzes the release of the 5'-terminal 2-deoxyribose-5-phosphate sugar moiety from incised apurinic/apyrimidinic (AP) sites to produce a substrate for DNA ligase. The dRP lyase reaction does not require divalent metal ions and likely proceeds via a Schiff base intermediate in a beta-elimination reaction mechanism. This chain is DNA polymerase subunit gamma-1, found in Homo sapiens (Human).